We begin with the raw amino-acid sequence, 454 residues long: UDP-N-acetylmuramoylalanine--D-glutamate ligase (454 aa).

114–120 (GTNGKTT) is a binding site for ATP.

This sequence belongs to the MurCDEF family.

It is found in the cytoplasm. The catalysed reaction is UDP-N-acetyl-alpha-D-muramoyl-L-alanine + D-glutamate + ATP = UDP-N-acetyl-alpha-D-muramoyl-L-alanyl-D-glutamate + ADP + phosphate + H(+). Its pathway is cell wall biogenesis; peptidoglycan biosynthesis. Its function is as follows. Cell wall formation. Catalyzes the addition of glutamate to the nucleotide precursor UDP-N-acetylmuramoyl-L-alanine (UMA). This chain is UDP-N-acetylmuramoylalanine--D-glutamate ligase, found in Desulfitobacterium hafniense (strain Y51).